A 300-amino-acid chain; its full sequence is ATP synthase gamma chain (300 aa).

The protein belongs to the ATPase gamma chain family. F-type ATPases have 2 components, CF(1) - the catalytic core - and CF(0) - the membrane proton channel. CF(1) has five subunits: alpha(3), beta(3), gamma(1), delta(1), epsilon(1). CF(0) has three main subunits: a, b and c.

It is found in the cell membrane. Its function is as follows. Produces ATP from ADP in the presence of a proton gradient across the membrane. The gamma chain is believed to be important in regulating ATPase activity and the flow of protons through the CF(0) complex. The chain is ATP synthase gamma chain from Acidothermus cellulolyticus (strain ATCC 43068 / DSM 8971 / 11B).